The primary structure comprises 349 residues: L-lactate dehydrogenase (349 aa).

The tract at residues 199 to 219 is disordered; sequence APEGSIIGADGNPTTDASTMF.

Belongs to the LDH2/MDH2 oxidoreductase family.

It localises to the cytoplasm. The enzyme catalyses (S)-lactate + NAD(+) = pyruvate + NADH + H(+). Its pathway is fermentation; pyruvate fermentation to lactate; (S)-lactate from pyruvate: step 1/1. This Cupriavidus necator (strain ATCC 17699 / DSM 428 / KCTC 22496 / NCIMB 10442 / H16 / Stanier 337) (Ralstonia eutropha) protein is L-lactate dehydrogenase (ldh).